A 702-amino-acid polypeptide reads, in one-letter code: Polyribonucleotide nucleotidyltransferase (702 aa).

2 residues coordinate Mg(2+): aspartate 484 and aspartate 490. Residues 551–610 (PHIESFKIAVEKIGALIGPGGKTVKSLSDQYRVTINTDSDGTVTVSGRDAQSVFDAKVAV) form the KH domain. Positions 620 to 688 (GRVYQGVVKR…RMGRLNLSYI (69 aa)) constitute an S1 motif domain.

The protein belongs to the polyribonucleotide nucleotidyltransferase family. Requires Mg(2+) as cofactor.

Its subcellular location is the cytoplasm. The enzyme catalyses RNA(n+1) + phosphate = RNA(n) + a ribonucleoside 5'-diphosphate. Functionally, involved in mRNA degradation. Catalyzes the phosphorolysis of single-stranded polyribonucleotides processively in the 3'- to 5'-direction. The polypeptide is Polyribonucleotide nucleotidyltransferase (Treponema pallidum (strain Nichols)).